Consider the following 960-residue polypeptide: RasGEF domain-containing serine/threonine-protein kinase X (960 aa).

The Protein kinase domain occupies 21–274; that stretch reads LEFNEKIGKG…FDEILSQLKV (254 aa). Residues 27–35 and Lys-48 each bind ATP; that span reads IGKGSFGSV. The active-site Proton acceptor is the Asp-140. The segment covering 314 to 368 has biased composition (low complexity); the sequence is NISFSPNNSNNNNNNNNNISNISPDITTGIQQINLSSSGGSNNSSPSTPPQGSQL. Disordered regions lie at residues 314–372 and 393–413; these read NISF…VSLA and GQLS…HKPS. An N-terminal Ras-GEF domain is found at 437-565; that stretch reads PCYAALTSHI…LGTTISNNEL (129 aa). Positions 596 to 651 are disordered; the sequence is NNNNNNNNNPVNNINNINNNNSVNSSSSNNNNNNNNNNSNNNNNNNNNNNNNNNNN. Residues 712–957 form the Ras-GEF domain; the sequence is HSTELARQIT…KNNSLKCEPP (246 aa).

Belongs to the protein kinase superfamily. TKL Ser/Thr protein kinase family.

It catalyses the reaction L-seryl-[protein] + ATP = O-phospho-L-seryl-[protein] + ADP + H(+). It carries out the reaction L-threonyl-[protein] + ATP = O-phospho-L-threonyl-[protein] + ADP + H(+). Its function is as follows. Promotes the exchange of Ras-bound GDP by GTP. This Dictyostelium discoideum (Social amoeba) protein is RasGEF domain-containing serine/threonine-protein kinase X (gefX).